We begin with the raw amino-acid sequence, 102 residues long: CRISPR-associated endoribonuclease Cas2 1 (102 aa).

D17 is a binding site for Mg(2+).

Belongs to the CRISPR-associated endoribonuclease Cas2 protein family. As to quaternary structure, homodimer, forms a heterotetramer with a Cas1 homodimer. Mg(2+) is required as a cofactor.

Functionally, CRISPR (clustered regularly interspaced short palindromic repeat), is an adaptive immune system that provides protection against mobile genetic elements (viruses, transposable elements and conjugative plasmids). CRISPR clusters contain sequences complementary to antecedent mobile elements and target invading nucleic acids. CRISPR clusters are transcribed and processed into CRISPR RNA (crRNA). Functions as a ssRNA-specific endoribonuclease. Involved in the integration of spacer DNA into the CRISPR cassette. This is CRISPR-associated endoribonuclease Cas2 1 from Rhodospirillum rubrum (strain ATCC 11170 / ATH 1.1.1 / DSM 467 / LMG 4362 / NCIMB 8255 / S1).